A 334-amino-acid chain; its full sequence is MTKVVVCALYKFVSLPHFESIRAPLLAMMEQAEVKGTLLLASEGINGTVAGNQEAIEALLAWLNNQNGLDNIVYKLSFDDEMPFYRTKVKLKNEIVTMGVEGIDPLKVVGTYVKPKDWNALISDPDVILVDTRNDYEVQIGTFKNAINPVTETFREFPEYVKQNLDPVKHKKVAMFCTGGIRCEKSTAYLKEQGFEEVYHLEGGILKYLEEVKQEESLWEGECFVFDNRVAVNHELKKGQYDQCNACRMPITEAEKRSPAYVQGVSCPHCVDKISDEQRKRFVERERQVNLAKARNEAHIGSDVNQVIEARREKKEALRKLAAQKNKLKQTGTV.

The Rhodanese domain occupies 123–217 (SDPDVILVDT…YLEEVKQEES (95 aa)). Cysteine 177 functions as the Cysteine persulfide intermediate in the catalytic mechanism.

Belongs to the TrhO family.

The catalysed reaction is uridine(34) in tRNA + AH2 + O2 = 5-hydroxyuridine(34) in tRNA + A + H2O. In terms of biological role, catalyzes oxygen-dependent 5-hydroxyuridine (ho5U) modification at position 34 in tRNAs. In Shewanella putrefaciens (strain CN-32 / ATCC BAA-453), this protein is tRNA uridine(34) hydroxylase.